We begin with the raw amino-acid sequence, 807 residues long: Protein FAR1-RELATED SEQUENCE 2 (807 aa).

Residues 52 to 138 enclose the FAR1 domain; it reads YFYREYARSV…VKEHNHEICP (87 aa). Positions 219–315 constitute an MULE domain; that stretch reads VVLFDTFYVR…CLWSVLSKIS (97 aa). The segment at 499 to 535 adopts an SWIM-type zinc-finger fold; it reads FFVALNNELLDACCSCHLFEYQGFLCKHAILVLQSAD. Residues 660-680 are a coiled coil; that stretch reads EDATNRSEELRQETEQVSSRA. Residues 788-798 are compositionally biased toward polar residues; sequence GSSQFQGSDSS. A disordered region spans residues 788 to 807; the sequence is GSSQFQGSDSSHPSDHRLSN.

It belongs to the FHY3/FAR1 family. Expressed in hypocotyls, rosette and cauline leaves, inflorescences stems, flowers and siliques.

It is found in the nucleus. Putative transcription activator involved in regulating light control of development. The polypeptide is Protein FAR1-RELATED SEQUENCE 2 (FRS2) (Arabidopsis thaliana (Mouse-ear cress)).